A 410-amino-acid chain; its full sequence is 3-phosphoshikimate 1-carboxyvinyltransferase (410 aa).

Residues Lys27, Ser28, and Arg32 each coordinate 3-phosphoshikimate. Lys27 lines the phosphoenolpyruvate pocket. Phosphoenolpyruvate-binding residues include Gly91 and Arg119. Positions 161, 162, 163, 297, 319, and 323 each coordinate 3-phosphoshikimate. Residue Gln163 coordinates phosphoenolpyruvate. Asp297 functions as the Proton acceptor in the catalytic mechanism. Phosphoenolpyruvate contacts are provided by Arg327, Arg368, and Lys394.

It belongs to the EPSP synthase family. Monomer.

The protein localises to the cytoplasm. It carries out the reaction 3-phosphoshikimate + phosphoenolpyruvate = 5-O-(1-carboxyvinyl)-3-phosphoshikimate + phosphate. The protein operates within metabolic intermediate biosynthesis; chorismate biosynthesis. Functionally, catalyzes the transfer of the enolpyruvyl moiety of phosphoenolpyruvate (PEP) to the 5-hydroxyl of shikimate-3-phosphate (S3P) to produce enolpyruvyl shikimate-3-phosphate and inorganic phosphate. The sequence is that of 3-phosphoshikimate 1-carboxyvinyltransferase from Pyrococcus abyssi (strain GE5 / Orsay).